A 147-amino-acid polypeptide reads, in one-letter code: Large ribosomal subunit protein uL13 (147 aa).

This sequence belongs to the universal ribosomal protein uL13 family. In terms of assembly, part of the 50S ribosomal subunit.

In terms of biological role, this protein is one of the early assembly proteins of the 50S ribosomal subunit, although it is not seen to bind rRNA by itself. It is important during the early stages of 50S assembly. In Mycolicibacterium smegmatis (strain ATCC 700084 / mc(2)155) (Mycobacterium smegmatis), this protein is Large ribosomal subunit protein uL13.